A 37-amino-acid polypeptide reads, in one-letter code: MYGYSGYGYGFGCGTNTFVLIVVLFILLIIVGAAFIC.

A helical transmembrane segment spans residues 17 to 37; it reads TFVLIVVLFILLIIVGAAFIC.

The protein belongs to the SscA family.

Its subcellular location is the membrane. This is an uncharacterized protein from Bacillus subtilis (strain 168).